A 121-amino-acid polypeptide reads, in one-letter code: Alpha-endosulfine (121 aa).

Residues 1 to 53 form a disordered region; the sequence is MSQKQEEENPAEETGEEKQDTQEKEGILPERAEEAKLKAKYPSLGQKPGGSDF. N-acetylserine is present on Ser-2. Ser-2 is subject to Phosphoserine. Basic and acidic residues predominate over residues 16–37; sequence EEKQDTQEKEGILPERAEEAKL. Position 21 is a phosphothreonine (Thr-21). Ser-43 carries the phosphoserine modification. At Ser-67 the chain carries Phosphoserine; by GWL. Residues 79–121 form a disordered region; sequence NKQLPSAGPDKNLVTGDHIPTPQDLPQRKSSLVTSKLAGGQVE. A Phosphoserine; by PKA modification is found at Ser-109.

Belongs to the endosulfine family. In terms of assembly, interacts (when phosphorylated at Ser-67) with PPP2R2D. Interacts with ABCC8. Interacts with SNCA; interaction is disrupted when phosphorylated at Ser-109. Post-translationally, phosphorylation at Ser-67 by GWL during mitosis is essential for interaction with PPP2R2D (PR55-delta) and subsequent inactivation of PP2A. Phosphorylated by PKA. As to expression, widely expressed with high levels in skeletal muscle and brain and lower levels in the pancreas.

The protein resides in the cytoplasm. Its function is as follows. Protein phosphatase inhibitor that specifically inhibits protein phosphatase 2A (PP2A) during mitosis. When phosphorylated at Ser-67 during mitosis, specifically interacts with PPP2R2D (PR55-delta) and inhibits its activity, leading to inactivation of PP2A, an essential condition to keep cyclin-B1-CDK1 activity high during M phase. Also acts as a stimulator of insulin secretion by interacting with sulfonylurea receptor (ABCC8), thereby preventing sulfonylurea from binding to its receptor and reducing K(ATP) channel currents. In Homo sapiens (Human), this protein is Alpha-endosulfine (ENSA).